Consider the following 182-residue polypeptide: Histone deacetylase complex subunit SAP30L (182 aa).

Met-1 is modified (N-acetylmethionine). A compositionally biased stretch (acidic residues) spans 1 to 10 (MNGFSTEEDS). Residues 1–22 (MNGFSTEEDSREGPPAAPAAAP) are disordered. Cystine bridges form between Cys-28/Cys-29 and Cys-37/Cys-73. The segment at 28-76 (CCLIADGERCVRPAGNASFSKRVQKSISQKKLKLDIDKSVRHLYICDFH) adopts an Atypical zinc-finger fold. A Glycyl lysine isopeptide (Lys-Gly) (interchain with G-Cter in SUMO2) cross-link involves residue Lys-48. Residues 84–103 (RNKRKRKASDDGGDSPEHDA) form a disordered region. Residues 85-90 (NKRKRK) carry the Nuclear localization signal (NLS) motif. The important for DNA and phosphoinositide binding stretch occupies residues 87–89 (RKR). Ser-92 and Ser-98 each carry phosphoserine. Residues Lys-154, Lys-165, and Lys-174 each participate in a glycyl lysine isopeptide (Lys-Gly) (interchain with G-Cter in SUMO2) cross-link.

Belongs to the SAP30 family. Interacts with components of the histone deacetylase complex SIN3A, HDAC1 and HDAC2. Binds histones and nucleosomes. Interacts with FEZ1.

It localises to the nucleus. The protein resides in the nucleolus. Functionally, functions as a transcription repressor, probably via its interaction with histone deacetylase complexes. Involved in the functional recruitment of the class 1 Sin3-histone deacetylase complex (HDAC) to the nucleolus. Binds DNA, apparently without sequence-specificity, and bends bound double-stranded DNA. Binds phosphoinositol phosphates (phosphoinositol 3-phosphate, phosphoinositol 4-phosphate and phosphoinositol 5-phosphate) via the same basic sequence motif that mediates DNA binding and nuclear import. This chain is Histone deacetylase complex subunit SAP30L (Sap30l), found in Mus musculus (Mouse).